The following is a 66-amino-acid chain: Large ribosomal subunit protein bL35 (66 aa).

This sequence belongs to the bacterial ribosomal protein bL35 family.

The chain is Large ribosomal subunit protein bL35 from Bradyrhizobium diazoefficiens (strain JCM 10833 / BCRC 13528 / IAM 13628 / NBRC 14792 / USDA 110).